A 205-amino-acid polypeptide reads, in one-letter code: FMN-dependent NADH:quinone oxidoreductase (205 aa).

Residues Ser10 and 16–18 each bind FMN; that span reads SVS.

This sequence belongs to the azoreductase type 1 family. In terms of assembly, homodimer. FMN is required as a cofactor.

The enzyme catalyses 2 a quinone + NADH + H(+) = 2 a 1,4-benzosemiquinone + NAD(+). It carries out the reaction N,N-dimethyl-1,4-phenylenediamine + anthranilate + 2 NAD(+) = 2-(4-dimethylaminophenyl)diazenylbenzoate + 2 NADH + 2 H(+). In terms of biological role, quinone reductase that provides resistance to thiol-specific stress caused by electrophilic quinones. Its function is as follows. Also exhibits azoreductase activity. Catalyzes the reductive cleavage of the azo bond in aromatic azo compounds to the corresponding amines. The chain is FMN-dependent NADH:quinone oxidoreductase from Agrobacterium fabrum (strain C58 / ATCC 33970) (Agrobacterium tumefaciens (strain C58)).